The chain runs to 1620 residues: MKLEQRIFFLICLVINSFSNCSLLVAPDGYYNIYRENKIENILNLKPNGNKSQDSYYPDVCSKAVKNKEGVKSFILSSFPLSTKEYANVIVTKGSHMTLGDGEYHQIFNINRFLNIVCVEGSLVFSTKDVVYMSALVILPGGNFECIDCTIKFRDLYPTNSLIDPFGFLPGIITLGGSLSLLGKQKTVYSAVLIDENILEVQDISSLDIFNGYSLFIFSESFPLGKASTFTFNSNQIKVLEIKIPKTDKSIRVFFYSRFSTFSTSTTASIHITGNSNVHIENFYIDSFGRTTNDQYSDTELIFSQDDPNLITGFINGSNQRFRSSLYIEHSNNVTIKNSVILENRGETRSPLIFFGSNVNISGNIISSKSGSSLIAQYGTENIQSTNNYYSLSLPLLKSLNSTLDSMDYGNEGNGIFSISPKINSINDIFNGQIIAINHIILSDRSSITGFDKDCYSPCYNDSIRVSSKVQHSVEFKITGSTFISSSNYSESSFLFRISETGSKQSSFYKIINSNLSYPISVLLENNAFILDNVYGFGNFTINGLIKRLDIINSTLDPSVTSSISLSNFSKAISIQNSFMDYRSFQKQNNQIYGSIITPYLYYFENTMNLIKVSKMYPNVNHQILAGTVLNMGIEIIIIAPLFGKMDCIFEDESGIQTIPFNKSSNSCVLPYLFKNEGSFNVRVTLSLTKSLDNIIFQVYFPMVTVFNIYSFYSGWAMIDSNIEKEIIIDGNIFKKGCQQQVLGNCTISTNSKLITGLPSVTESDKLNRLFSSGITSINPYEPVTITIPIDKESKKNQIQLFFTHQPIDIETSLLSIYVENQPIFLLEPLQSNLDSTFKNLTFHYENSKSLEKIKITFITRGDIYLTSTAIYSSTNQPIYNEVIGINEQLNILAIVLPITISLFAAASILAGYLVIKKYKKPNMYYNRNTNGNIGMKVFSTKFKRRPKKVIPLSIPLSTNRITKKSLQSLDSMAENPVILLSIPELEKANEPEFNPEKTFLQESELLDLPTPKVEPEEPRINIVPLPRFPTVYKKEDNDKLLKELNITGPITSENIESFFEVDVGLPSLIIKNESEIILQEIDYIETGEIQEMEGSFLEDKSTDTTVIVTKSDGLPKFFQTKVFSKRFNDISKFDNDFFDLKEYIVEHQEESFEIPFMTSEDEVDETKINIIDFLLSPKSNKVALNMYLKSFQNRNHKLCYGKYGSNKNSILVIEGTSYYYDCTDVRLPISTPRSNLNFGITDGNKCIVDRKYRERLQYINVYSEPFRIYTLFPDSNDNVTITTSECCKEIDPFGSLDVDIFVTLKTTTKFNEKVTIRYETDDKELAFSTFVYLNLESQVSSKIDFDEIVLEKYLSEGSFGVVYSAIWRSSSVAVKLFKHHYSKDEIDKETSILSKIKHPNIVSFIGSLNFLNTYGIVIDYHPRGSLNYYTRNQNIKLSMVQNIRISLDISRACSFLHKNGIIHRDLKPDNVLIVSFDPDSSICAKISDFGTCREINGKHELNSKAGTTRYMSPEILEGLPYTYSTDVYSFAILFFELLSGRVPFREIPKREIPRFVRLGTRPRLDQDVFADNDISLILLACWNPNPRGRPTFDTLIDLLEKLLKKYKERAKRNKKNQNQ.

The N-terminal stretch at 1–19 (MKLEQRIFFLICLVINSFS) is a signal peptide. The Extracellular segment spans residues 20–891 (NCSLLVAPDG…EVIGINEQLN (872 aa)). A helical transmembrane segment spans residues 892–912 (ILAIVLPITISLFAAASILAG). Over 913–1620 (YLVIKKYKKP…AKRNKKNQNQ (708 aa)) the chain is Cytoplasmic. The 256-residue stretch at 1349 to 1604 (IVLEKYLSEG…TLIDLLEKLL (256 aa)) folds into the Protein kinase domain. ATP contacts are provided by residues 1355-1363 (LSEGSFGVV) and K1376. D1466 serves as the catalytic Proton acceptor.

This sequence in the N-terminal section; belongs to the GDT family. The protein in the C-terminal section; belongs to the protein kinase superfamily. TKL Ser/Thr protein kinase family.

It is found in the membrane. The catalysed reaction is L-seryl-[protein] + ATP = O-phospho-L-seryl-[protein] + ADP + H(+). It catalyses the reaction L-threonyl-[protein] + ATP = O-phospho-L-threonyl-[protein] + ADP + H(+). This Dictyostelium discoideum (Social amoeba) protein is Probable serine/threonine-protein kinase gdt4 (gdt4).